Here is a 98-residue protein sequence, read N- to C-terminus: NADH-ubiquinone oxidoreductase chain 4L (98 aa).

The next 3 helical transmembrane spans lie at 1–21 (MTPVHFSFSSAFILGLMGLAF), 29–49 (ALLCLEGMMLSLFIALALWAL), and 59–79 (APMLLLAFSACEASTGLALLV).

This sequence belongs to the complex I subunit 4L family.

It localises to the mitochondrion membrane. The enzyme catalyses a ubiquinone + NADH + 5 H(+)(in) = a ubiquinol + NAD(+) + 4 H(+)(out). Its function is as follows. Core subunit of the mitochondrial membrane respiratory chain NADH dehydrogenase (Complex I) which catalyzes electron transfer from NADH through the respiratory chain, using ubiquinone as an electron acceptor. Part of the enzyme membrane arm which is embedded in the lipid bilayer and involved in proton translocation. The chain is NADH-ubiquinone oxidoreductase chain 4L (MT-ND4L) from Carassius auratus (Goldfish).